The sequence spans 230 residues: Flagellar L-ring protein (230 aa).

Residues 1–26 (MKQVRLLPSATVRAACAVAVAAFAAG) form the signal peptide. Cys27 is lipidated: N-palmitoyl cysteine. The S-diacylglycerol cysteine moiety is linked to residue Cys27.

It belongs to the FlgH family. The basal body constitutes a major portion of the flagellar organelle and consists of four rings (L,P,S, and M) mounted on a central rod.

The protein localises to the cell outer membrane. It is found in the bacterial flagellum basal body. Assembles around the rod to form the L-ring and probably protects the motor/basal body from shearing forces during rotation. The chain is Flagellar L-ring protein from Burkholderia lata (strain ATCC 17760 / DSM 23089 / LMG 22485 / NCIMB 9086 / R18194 / 383).